A 75-amino-acid chain; its full sequence is UPF0270 protein Avin_35000 (75 aa).

Belongs to the UPF0270 family.

The polypeptide is UPF0270 protein Avin_35000 (Azotobacter vinelandii (strain DJ / ATCC BAA-1303)).